Consider the following 591-residue polypeptide: Metalloendopeptidase OPG085 (591 aa).

Zn(2+) is bound at residue His-41. Glu-44 is a catalytic residue. Zn(2+) is bound by residues His-45 and Glu-112.

The protein belongs to the peptidase M44 family. It depends on Zn(2+) as a cofactor. In terms of processing, undergoes proteolytic processing during the course of infection. May be cleaved into 46 kDa and 22 kDa products (Potential).

It localises to the virion. Probably involved in maturation of some viral proteins by processing them preferentially at Ala-Gly-|-Ser/Thr/Lys motifs. Does not seem to be responsible for the cleavage of major core proteins. In Monkeypox virus, this protein is Metalloendopeptidase OPG085 (OPG085).